Here is a 435-residue protein sequence, read N- to C-terminus: 3-phosphoshikimate 1-carboxyvinyltransferase (435 aa).

The 3-phosphoshikimate site is built by lysine 23, serine 24, and arginine 28. Lysine 23 serves as a coordination point for phosphoenolpyruvate. Residues glycine 97 and arginine 125 each coordinate phosphoenolpyruvate. Residues serine 170, serine 171, glutamine 172, serine 198, aspartate 315, asparagine 338, and lysine 342 each contribute to the 3-phosphoshikimate site. Glutamine 172 lines the phosphoenolpyruvate pocket. The Proton acceptor role is filled by aspartate 315. Positions 346, 388, and 413 each coordinate phosphoenolpyruvate.

The protein belongs to the EPSP synthase family. In terms of assembly, monomer.

It localises to the cytoplasm. The catalysed reaction is 3-phosphoshikimate + phosphoenolpyruvate = 5-O-(1-carboxyvinyl)-3-phosphoshikimate + phosphate. It participates in metabolic intermediate biosynthesis; chorismate biosynthesis; chorismate from D-erythrose 4-phosphate and phosphoenolpyruvate: step 6/7. Its function is as follows. Catalyzes the transfer of the enolpyruvyl moiety of phosphoenolpyruvate (PEP) to the 5-hydroxyl of shikimate-3-phosphate (S3P) to produce enolpyruvyl shikimate-3-phosphate and inorganic phosphate. The protein is 3-phosphoshikimate 1-carboxyvinyltransferase of Buchnera aphidicola subsp. Cinara cedri (strain Cc).